The following is a 1049-amino-acid chain: Isoleucine--tRNA ligase (1049 aa).

Positions 48–58 (PYTTGRIHLGT) match the 'HIGH' region motif. A 'KMSKS' region motif is present at residues 596–600 (KMSKS). Lys-599 is a binding site for ATP.

Belongs to the class-I aminoacyl-tRNA synthetase family. IleS type 2 subfamily. As to quaternary structure, monomer. The cofactor is Zn(2+).

It localises to the cytoplasm. It carries out the reaction tRNA(Ile) + L-isoleucine + ATP = L-isoleucyl-tRNA(Ile) + AMP + diphosphate. In terms of biological role, catalyzes the attachment of isoleucine to tRNA(Ile). As IleRS can inadvertently accommodate and process structurally similar amino acids such as valine, to avoid such errors it has two additional distinct tRNA(Ile)-dependent editing activities. One activity is designated as 'pretransfer' editing and involves the hydrolysis of activated Val-AMP. The other activity is designated 'posttransfer' editing and involves deacylation of mischarged Val-tRNA(Ile). This Methanothrix thermoacetophila (strain DSM 6194 / JCM 14653 / NBRC 101360 / PT) (Methanosaeta thermophila) protein is Isoleucine--tRNA ligase.